We begin with the raw amino-acid sequence, 197 residues long: Imidazoleglycerol-phosphate dehydratase (197 aa).

The protein belongs to the imidazoleglycerol-phosphate dehydratase family.

It is found in the cytoplasm. It catalyses the reaction D-erythro-1-(imidazol-4-yl)glycerol 3-phosphate = 3-(imidazol-4-yl)-2-oxopropyl phosphate + H2O. It participates in amino-acid biosynthesis; L-histidine biosynthesis; L-histidine from 5-phospho-alpha-D-ribose 1-diphosphate: step 6/9. This Methanocaldococcus jannaschii (strain ATCC 43067 / DSM 2661 / JAL-1 / JCM 10045 / NBRC 100440) (Methanococcus jannaschii) protein is Imidazoleglycerol-phosphate dehydratase.